The primary structure comprises 352 residues: UPF0324 membrane protein blr3189 (352 aa).

A run of 11 helical transmembrane segments spans residues Ile-21–Arg-43, Tyr-53–Trp-71, Leu-88–Ile-110, Ala-114–Leu-136, Leu-143–Ala-165, Ser-175–Leu-197, Ile-204–Val-226, Leu-236–Ala-253, Val-265–Leu-284, Val-294–Gly-316, and Val-329–Phe-351.

This sequence belongs to the UPF0324 family.

It localises to the cell membrane. This Bradyrhizobium diazoefficiens (strain JCM 10833 / BCRC 13528 / IAM 13628 / NBRC 14792 / USDA 110) protein is UPF0324 membrane protein blr3189.